The primary structure comprises 475 residues: Ribulose bisphosphate carboxylase large chain (475 aa).

Residues 1 to 2 constitute a propeptide that is removed on maturation; the sequence is MS. Pro-3 carries the N-acetylproline modification. Lys-14 carries the post-translational modification N6,N6,N6-trimethyllysine. Substrate contacts are provided by Asn-123 and Thr-173. The Proton acceptor role is filled by Lys-175. Lys-177 contacts substrate. Positions 201, 203, and 204 each coordinate Mg(2+). Lys-201 carries the N6-carboxylysine modification. His-294 functions as the Proton acceptor in the catalytic mechanism. The substrate site is built by Arg-295, His-327, and Ser-379.

It belongs to the RuBisCO large chain family. Type I subfamily. In terms of assembly, heterohexadecamer of 8 large chains and 8 small chains; disulfide-linked. The disulfide link is formed within the large subunit homodimers. It depends on Mg(2+) as a cofactor. In terms of processing, the disulfide bond which can form in the large chain dimeric partners within the hexadecamer appears to be associated with oxidative stress and protein turnover.

The protein resides in the plastid. It localises to the chloroplast. The catalysed reaction is 2 (2R)-3-phosphoglycerate + 2 H(+) = D-ribulose 1,5-bisphosphate + CO2 + H2O. The enzyme catalyses D-ribulose 1,5-bisphosphate + O2 = 2-phosphoglycolate + (2R)-3-phosphoglycerate + 2 H(+). RuBisCO catalyzes two reactions: the carboxylation of D-ribulose 1,5-bisphosphate, the primary event in carbon dioxide fixation, as well as the oxidative fragmentation of the pentose substrate in the photorespiration process. Both reactions occur simultaneously and in competition at the same active site. The sequence is that of Ribulose bisphosphate carboxylase large chain from Nandina domestica (Heavenly bamboo).